The primary structure comprises 1103 residues: Retinal guanylyl cyclase 2 (1103 aa).

An N-terminal signal peptide occupies residues 1-46 (MFLAPWPFSHLMLWFVTLGRQRGQHGLASFKLLWCLWLLVLMSLPL). Residues 47-465 (QVWAPPYKIG…DGRICQGGIN (419 aa)) lie on the Extracellular side of the membrane. A disulfide bridge links cysteine 104 with cysteine 132. The helical transmembrane segment at 466-490 (PTFALMVCLALLIALLSINGFAYFI) threads the bilayer. Residues 491–1103 (RHRINKIQLI…FQRRKQKSSW (613 aa)) lie on the Cytoplasmic side of the membrane. In terms of domain architecture, Protein kinase spans 532–812 (FQITSEVQSG…DEIFNQFKTF (281 aa)). Positions 884-1014 (TLYFSDIVGF…DTVNTASRME (131 aa)) constitute a Guanylate cyclase domain.

It belongs to the adenylyl cyclase class-4/guanylyl cyclase family. As to quaternary structure, homodimer. Interacts with RD3; promotes the exit of GUCY2F from the endoplasmic reticulum and its trafficking to the photoreceptor outer segments. There are 9 conserved cysteine residues in sensory guanylate cyclases, 6 in the extracellular domain, which may be involved in intra- or interchain disulfide bonds. As to expression, expressed specifically in retina.

The protein resides in the membrane. The protein localises to the photoreceptor outer segment membrane. It catalyses the reaction GTP = 3',5'-cyclic GMP + diphosphate. Activated by GUCA1B when free calcium ions concentration is low, and inhibited by GUCA1B when free calcium ions concentration is high. Inhibited by RD3. Responsible for the synthesis of cyclic GMP (cGMP) in rods and cones of photoreceptors. Plays an essential role in phototransduction, by mediating cGMP replenishment. May also participate in the trafficking of membrane-asociated proteins to the photoreceptor outer segment membrane. The protein is Retinal guanylyl cyclase 2 (GUCY2F) of Bos taurus (Bovine).